We begin with the raw amino-acid sequence, 255 residues long: MNILIANDDGVFAPGIQALAHALKPLGRVVIVAPESERSGYSSALTLDRPLRPIQISEDVWAVNGTPADCVYLSMNGLFDFEFDLVVSGINSGANLGDDVLYSGTVGAAFEGRLMKQPAIAVSLAGSNVRSYEHAHDYAVAAKWVHDFIQKGLPNLPPRHILNINIPDVAALKGERVTYQGLRAQSKPITSHVDPRGRQVYWIGLAGEAVTDPKKTSSHIQSDFFAVANGYVSITPIQMDATNYDILEDLQTYIG.

Residues Asp-8, Asp-9, Ser-39, and Asn-91 each contribute to the a divalent metal cation site.

Belongs to the SurE nucleotidase family. The cofactor is a divalent metal cation.

The protein resides in the cytoplasm. The enzyme catalyses a ribonucleoside 5'-phosphate + H2O = a ribonucleoside + phosphate. Its function is as follows. Nucleotidase that shows phosphatase activity on nucleoside 5'-monophosphates. This is 5'-nucleotidase SurE from Acinetobacter baylyi (strain ATCC 33305 / BD413 / ADP1).